Consider the following 269-residue polypeptide: Surfeit locus protein 4 (269 aa).

The next 5 helical transmembrane spans lie at 65–85 (LASS…VLVL), 92–112 (YACF…SILW), 179–199 (FFSI…AIGF), 203–223 (LAAL…NAFW), and 242–262 (TMSV…GVSM). A Di-lysine motif motif is present at residues 266 to 269 (KKEW).

It belongs to the SURF4 family. Found in a complex composed at least of SURF4, TMED2 and TMED10. May interact with LMAN1. Interacts with ZFYVE27 and with KIF5A in a ZFYVE27-dependent manner. Interacts with STING1. Interacts with SAR1B. Interacts with TMEM41B.

The protein localises to the endoplasmic reticulum membrane. Its subcellular location is the endoplasmic reticulum-Golgi intermediate compartment membrane. It localises to the golgi apparatus membrane. In terms of biological role, endoplasmic reticulum cargo receptor that mediates the export of lipoproteins by recruiting cargos into COPII vesicles to facilitate their secretion. Acts as a cargo receptor for lipoproteins bearing both APOB and APOA1, thereby regulating lipoprotein delivery and the maintenance of lipid homeostasis. Synergizes with the GTPase SAR1B to mediate transport of circulating lipoproteins. Promotes the secretion of PCSK9. Also mediates the efficient secretion of erythropoietin (EPO). May also play a role in the maintenance of the architecture of the endoplasmic reticulum-Golgi intermediate compartment and of the Golgi. This Mus musculus (Mouse) protein is Surfeit locus protein 4.